The following is a 485-amino-acid chain: E3 ubiquitin-protein ligase TRIM68 (485 aa).

The RING-type zinc-finger motif lies at 16-61 (CPICMTFLREPVSISCGHTFCHSCLSGLWKLPGESQNLSYTCPLCR). Residues 93–134 (LKTDVCDLHKEQLTMFCKEDDMVTCEACKQSPEHEAHSVVPI) form a B box-type zinc finger. The Zn(2+) site is built by cysteine 98, histidine 101, cysteine 120, and histidine 126. Residues 144–226 (KLQQALEHLR…EQEKGETASK (83 aa)) adopt a coiled-coil conformation. The B30.2/SPRY domain maps to 285-483 (LKTDCRVLGL…TPLTICTLGG (199 aa)).

Belongs to the TRIM/RBCC family. Interacts with AR/androgen receptor (via ligand-binding domain). Interacts with KAT5/TIP60. Auto-ubiquitinated.

It is found in the cytoplasm. The protein resides in the perinuclear region. It localises to the nucleus. It catalyses the reaction S-ubiquitinyl-[E2 ubiquitin-conjugating enzyme]-L-cysteine + [acceptor protein]-L-lysine = [E2 ubiquitin-conjugating enzyme]-L-cysteine + N(6)-ubiquitinyl-[acceptor protein]-L-lysine.. It participates in protein modification; protein ubiquitination. Functionally, functions as a ubiquitin E3 ligase. Acts as a coactivator of androgen receptor (AR) depending on its ubiquitin ligase activity. The polypeptide is E3 ubiquitin-protein ligase TRIM68 (Trim68) (Mus musculus (Mouse)).